Here is a 150-residue protein sequence, read N- to C-terminus: D-aminoacyl-tRNA deacylase (150 aa).

Positions 138–139 (GP) match the Gly-cisPro motif, important for rejection of L-amino acids motif.

Belongs to the DTD family. Homodimer.

The protein localises to the cytoplasm. It carries out the reaction glycyl-tRNA(Ala) + H2O = tRNA(Ala) + glycine + H(+). It catalyses the reaction a D-aminoacyl-tRNA + H2O = a tRNA + a D-alpha-amino acid + H(+). Its function is as follows. An aminoacyl-tRNA editing enzyme that deacylates mischarged D-aminoacyl-tRNAs. Also deacylates mischarged glycyl-tRNA(Ala), protecting cells against glycine mischarging by AlaRS. Acts via tRNA-based rather than protein-based catalysis; rejects L-amino acids rather than detecting D-amino acids in the active site. By recycling D-aminoacyl-tRNA to D-amino acids and free tRNA molecules, this enzyme counteracts the toxicity associated with the formation of D-aminoacyl-tRNA entities in vivo and helps enforce protein L-homochirality. This Christiangramia forsetii (strain DSM 17595 / CGMCC 1.15422 / KT0803) (Gramella forsetii) protein is D-aminoacyl-tRNA deacylase.